The chain runs to 303 residues: Mitochondrial carrier homolog 2 (303 aa).

N-acetylalanine is present on Ala-2. Residues 2–15 lie on the Mitochondrial intermembrane side of the membrane; sequence ADAASQVLLGSGLT. Solcar repeat units follow at residues 2-98 and 118-206; these read ADAA…YQEC and DRVI…VNTY. Residues 16-36 traverse the membrane as a helical segment; the sequence is ILSQPLMYVKVLIQVGYEPLA. The Cytoplasmic segment spans residues 37 to 77; it reads PTVGRNIFGRQVCQLPGLFCYAQHIASIDGKRGLFTGLTPR. The helical transmembrane segment at 78 to 92 threads the bilayer; sequence LCSGVLGTVVHGKVL. Over 93–135 the chain is Mitochondrial intermembrane; it reads QHYQECDKAEESGSGNVQKEVSSSFDRVIKETTREMMARSAAT. A helical membrane pass occupies residues 136–156; that stretch reads LITHPFHVITLRSMVQFIGRE. Residues 157-180 are Cytoplasmic-facing; that stretch reads SKYCGLCDSIATIYREEGILGFFA. A helical membrane pass occupies residues 181–199; that stretch reads GLIPRLLGDIISLWLCNSL. The Mitochondrial intermembrane segment spans residues 200–231; that stretch reads AYLVNTYALDSGVSTMNEMKSYSQAVTGFFAS. Residues 232–252 form a helical membrane-spanning segment; it reads MLTYPFVLVSNLMAVNNCGLA. Over 253–280 the chain is Cytoplasmic; sequence GGCPPYAPIYSSWIDCWCMLQKEGNMSR. A helical membrane pass occupies residues 281 to 303; that stretch reads GNSLFFRKVPFGKTYCCDLRMLI.

Belongs to the mitochondrial carrier (TC 2.A.29) family. In terms of assembly, interacts with p15BID.

Its subcellular location is the mitochondrion outer membrane. Functionally, protein insertase that mediates insertion of transmembrane proteins into the mitochondrial outer membrane. Catalyzes insertion of proteins with alpha-helical transmembrane regions, such as signal-anchored, tail-anchored and multi-pass membrane proteins. Does not mediate insertion of beta-barrel transmembrane proteins. Also acts as a receptor for the truncated form of pro-apoptotic BH3-interacting domain death agonist (p15 BID) and has therefore a critical function in apoptosis. Regulates the quiescence/cycling of hematopoietic stem cells (HSCs). Acts as a regulator of mitochondrial fusion, essential for the naive-to-primed interconversion of embryonic stem cells (ESCs). Acts as a regulator of lipid homeostasis and has a regulatory role in adipocyte differentiation and biology. The sequence is that of Mitochondrial carrier homolog 2 (MTCH2) from Bos taurus (Bovine).